The primary structure comprises 436 residues: GTPase Der (436 aa).

EngA-type G domains lie at 4-167 and 176-351; these read PTIA…PEQQ and IKFS…ENHR. GTP is bound by residues 10-17, 57-61, 119-122, 182-189, 229-233, and 294-297; these read GRANVGKS, DTGGI, NKID, GRPNVGKS, DTAGM, and NKWD. Residues 352–436 form the KH-like domain; it reads KRVQSSTLNE…PLHLIARKRN (85 aa).

It belongs to the TRAFAC class TrmE-Era-EngA-EngB-Septin-like GTPase superfamily. EngA (Der) GTPase family. Associates with the 50S ribosomal subunit.

GTPase that plays an essential role in the late steps of ribosome biogenesis. In Macrococcus caseolyticus (strain JCSC5402) (Macrococcoides caseolyticum), this protein is GTPase Der.